Here is a 196-residue protein sequence, read N- to C-terminus: MEIISLKRFILLMLATSSLLTSNIFCTDESRIPSLYSKKNYDKYSEPRGDLGWEKERSLTFEEVKDWGPKIKMNTPAVNKMPPSAANLPLRFGRNMEEERSTRVMAHLPLRLGKNREDSLSRRVPNLPQRFGRTIAAKSITKTLSNLLQQSMHSPSTNGLLYSMTCRPQEIQNPGQKNLRRLGFQKIDDAELKQEK.

Positions 1–21 (MEIISLKRFILLMLATSSLLT) are cleaved as a signal peptide. The propeptide occupies 22–57 (SNIFCTDESRIPSLYSKKNYDKYSEPRGDLGWEKER). Phenylalanine amide is present on phenylalanine 92. Propeptides lie at residues 95 to 99 (NMEEE) and 115 to 121 (NREDSLS). Phenylalanine 131 is subject to Phenylalanine amide. Positions 134–196 (TIAAKSITKT…IDDAELKQEK (63 aa)) are excised as a propeptide.

The protein belongs to the FARP (FMRFamide related peptide) family. In terms of tissue distribution, expressed in hypothalamus, where it is localized to the dorsomedial hypothalamic nucleus (DMH), paraventricular nucleus (PVN), and to neuronal projections from the PVN to the neurosecretory zone of the median eminence.

The protein localises to the secreted. In terms of biological role, may act in concert with kisspeptin, through opposing affects, to regulate the activity of gonadotropin-releasing hormone (GnRH) neurons across the seasons, leading to an annual change in fertility and the cyclical seasonal transition from non-breeding to breeding season. Its function is as follows. Efficiently inhibits forskolin-induced production of cAMP. Acts as a potent negative regulator of gonadotropin synthesis and secretion. Induces secretion of prolactin. Functionally, efficiently inhibits forskolin-induced production of cAMP. Blocks morphine-induced analgesia. Shows no inhibitory activity of forskolin-induced production of cAMP. In Ovis aries (Sheep), this protein is Pro-FMRFamide-related neuropeptide VF.